The chain runs to 384 residues: Lipid-A-disaccharide synthase (384 aa).

This sequence belongs to the LpxB family.

The catalysed reaction is a lipid X + a UDP-2-N,3-O-bis[(3R)-3-hydroxyacyl]-alpha-D-glucosamine = a lipid A disaccharide + UDP + H(+). The protein operates within bacterial outer membrane biogenesis; LPS lipid A biosynthesis. Condensation of UDP-2,3-diacylglucosamine and 2,3-diacylglucosamine-1-phosphate to form lipid A disaccharide, a precursor of lipid A, a phosphorylated glycolipid that anchors the lipopolysaccharide to the outer membrane of the cell. The protein is Lipid-A-disaccharide synthase of Geobacter metallireducens (strain ATCC 53774 / DSM 7210 / GS-15).